The chain runs to 613 residues: Potassium voltage-gated channel subfamily A member 5 (613 aa).

Residues Met-1–Glu-108 form a disordered region. Residues Met-1 to Glu-211 form a tetramerization domain region. Residues Met-1–Gly-247 are Cytoplasmic-facing. The span at Gly-45 to Ser-62 shows a compositional bias: basic and acidic residues. 2 tandem repeats follow at residues Asp-61 to Pro-71 and Asp-72 to Pro-82. The 2 X 11 AA tandem repeat of D-[SP]-G-V-R-P-L-P-P-L-P stretch occupies residues Asp-61–Pro-82. Pro residues predominate over residues Pro-66–Glu-83. Over residues Glu-84 to Pro-93 the composition is skewed to basic and acidic residues. Lys-221 is covalently cross-linked (Glycyl lysine isopeptide (Lys-Gly) (interchain with G-Cter in SUMO)). The chain crosses the membrane as a helical span at residues Ser-248–Leu-269. Topologically, residues Glu-270–Pro-323 are extracellular. Residues Leu-282–Met-304 are disordered. The span at Pro-285–Ala-295 shows a compositional bias: pro residues. Residues Phe-324–Ala-345 traverse the membrane as a helical segment. Cys-346 carries S-palmitoyl cysteine lipidation. The Cytoplasmic portion of the chain corresponds to Cys-346–Ile-356. The chain crosses the membrane as a helical span at residues Met-357–Ala-377. Topologically, residues Glu-378–Ser-395 are extracellular. A helical; Voltage-sensor membrane pass occupies residues Leu-396 to His-416. Residues Ser-417–Met-431 are Cytoplasmic-facing. Positions Lys-418 to Met-431 are S4-S5 linker. Residues Arg-432–Tyr-453 traverse the membrane as a helical segment. The Extracellular segment spans residues Phe-454–Ile-467. Residues Pro-468–Thr-479 constitute an intramembrane region (helical). The Selectivity filter motif lies at Thr-480–Asp-485. An intramembrane segment occupies Thr-480–Arg-487. Residues Pro-488–Lys-494 are Extracellular-facing. Residues Ile-495–Tyr-523 form a helical membrane-spanning segment. At His-524 to Leu-613 the chain is on the cytoplasmic side. Residues Pro-532–Ser-559 form a disordered region. Lys-536 participates in a covalent cross-link: Glycyl lysine isopeptide (Lys-Gly) (interchain with G-Cter in SUMO). At Ser-557 the chain carries Phosphoserine; by PKA. Positions Thr-611–Leu-613 match the PDZ-binding motif.

Belongs to the potassium channel family. A (Shaker) (TC 1.A.1.2) subfamily. Kv1.5/KCNA5 sub-subfamily. As to quaternary structure, homotetramer and heterotetramer of potassium channel proteins. Interacts with DLG1, which enhances channel currents. Forms a ternary complex with DLG1 and CAV3. Interacts with KCNAB1. Interacts with UBE2I. Interacts with XIRP2; the interaction is required for normal action potential configuration in the heart. Post-translationally, glycosylated. Sumoylated on Lys-221, and Lys-536, preferentially with SUMO3. Sumoylation regulates the voltage sensitivity of the channel. In terms of tissue distribution, pancreatic islets and insulinoma.

It is found in the cell membrane. The catalysed reaction is K(+)(in) = K(+)(out). With respect to regulation, inhibited by 4-aminopyridine, nicotine, bepridil, correolide, and endothelin-1. In terms of biological role, voltage-gated potassium channel that mediates transmembrane potassium transport in excitable membranes. Forms tetrameric potassium-selective channels through which potassium ions pass in accordance with their electrochemical gradient. The channel alternates between opened and closed conformations in response to the voltage difference across the membrane. Can form functional homotetrameric channels and heterotetrameric channels that contain variable proportions of KCNA1, KCNA2, KCNA4, KCNA5, and possibly other family members as well; channel properties depend on the type of alpha subunits that are part of the channel. Channel properties are modulated by cytoplasmic beta subunits that regulate the subcellular location of the alpha subunits and promote rapid inactivation. Homotetrameric channels display rapid activation and slow inactivation. Required for normal electrical conduction including formation of the infranodal ventricular conduction system and normal action potential configuration, as a result of its interaction with XIRP2. May play a role in regulating the secretion of insulin in normal pancreatic islets. Functionally, exhibits a faster depolarization rate, reduced voltage-dependent recovery from inactivation and an excessive cumulative inactivation. The protein is Potassium voltage-gated channel subfamily A member 5 (KCNA5) of Homo sapiens (Human).